Consider the following 805-residue polypeptide: Leucine--tRNA ligase (805 aa).

The 'HIGH' region motif lies at 40–51 (PYPSGSGLHVGH). Positions 576–580 (KMSKS) match the 'KMSKS' region motif. K579 is an ATP binding site.

The protein belongs to the class-I aminoacyl-tRNA synthetase family.

It is found in the cytoplasm. The catalysed reaction is tRNA(Leu) + L-leucine + ATP = L-leucyl-tRNA(Leu) + AMP + diphosphate. This is Leucine--tRNA ligase from Chloroherpeton thalassium (strain ATCC 35110 / GB-78).